The chain runs to 527 residues: Bifunctional purine biosynthesis protein PurH (527 aa).

The 149-residue stretch at 1–149 (MASDFLPVRR…KNFARVAVAT (149 aa)) folds into the MGS-like domain.

It belongs to the PurH family.

It carries out the reaction (6R)-10-formyltetrahydrofolate + 5-amino-1-(5-phospho-beta-D-ribosyl)imidazole-4-carboxamide = 5-formamido-1-(5-phospho-D-ribosyl)imidazole-4-carboxamide + (6S)-5,6,7,8-tetrahydrofolate. It catalyses the reaction IMP + H2O = 5-formamido-1-(5-phospho-D-ribosyl)imidazole-4-carboxamide. It functions in the pathway purine metabolism; IMP biosynthesis via de novo pathway; 5-formamido-1-(5-phospho-D-ribosyl)imidazole-4-carboxamide from 5-amino-1-(5-phospho-D-ribosyl)imidazole-4-carboxamide (10-formyl THF route): step 1/1. Its pathway is purine metabolism; IMP biosynthesis via de novo pathway; IMP from 5-formamido-1-(5-phospho-D-ribosyl)imidazole-4-carboxamide: step 1/1. The polypeptide is Bifunctional purine biosynthesis protein PurH (Xanthomonas campestris pv. campestris (strain 8004)).